Here is a 78-residue protein sequence, read N- to C-terminus: Large ribosomal subunit protein bL28 (78 aa).

Residues 1-21 form a disordered region; the sequence is MSRVCQVTGKRPVSGNNRSHA.

Belongs to the bacterial ribosomal protein bL28 family.

This is Large ribosomal subunit protein bL28 from Sodalis glossinidius (strain morsitans).